Consider the following 532-residue polypeptide: Phosphoenolpyruvate carboxylase (532 aa).

This sequence belongs to the PEPCase type 2 family. Homotetramer. Mg(2+) serves as cofactor.

The enzyme catalyses oxaloacetate + phosphate = phosphoenolpyruvate + hydrogencarbonate. In terms of biological role, catalyzes the irreversible beta-carboxylation of phosphoenolpyruvate (PEP) to form oxaloacetate (OAA), a four-carbon dicarboxylic acid source for the tricarboxylic acid cycle. The polypeptide is Phosphoenolpyruvate carboxylase (Methanopyrus kandleri (strain AV19 / DSM 6324 / JCM 9639 / NBRC 100938)).